The following is an 812-amino-acid chain: Phospholipase D alpha 1 (812 aa).

Positions 1–46 (MAQMLLHGTLHATIFEAASLSNPHRASGSAPKFIRKFVEGIEDTVG) are excised as a propeptide. Positions 1 to 130 (MAQMLLHGTL…LNGEEIDRWL (130 aa)) constitute a C2 domain. Position 190 (aspartate 190) interacts with Ca(2+). Positions 330 to 368 (TMFTHHQKIVVVDHELPNQGSQQRRIVSFVGGLDLCDGR) constitute a PLD phosphodiesterase 1 domain. Active-site residues include histidine 335, lysine 337, and aspartate 342. Residue histidine 335 participates in a 1,2-diacyl-sn-glycero-3-phosphate binding. Ca(2+) is bound by residues histidine 374 and histidine 408. A 1,2-diacyl-sn-glycero-3-phosphate-binding residues include glutamine 524 and histidine 663. In terms of domain architecture, PLD phosphodiesterase 2 spans 658 to 685 (FMIYVHTKMMIVDDEYIIIGSANINQRS). Active-site residues include histidine 663, lysine 665, and aspartate 670. Glutamate 724 contacts Ca(2+).

The protein belongs to the phospholipase D family. C2-PLD subfamily. In terms of assembly, monomer. Ca(2+) is required as a cofactor. Expressed in leaves, roots, developing seeds and cultured cells.

The catalysed reaction is a 1,2-diacyl-sn-glycero-3-phosphocholine + H2O = a 1,2-diacyl-sn-glycero-3-phosphate + choline + H(+). Hydrolyzes glycerol-phospholipids at the terminal phosphodiesteric bond. Plays an important role in various cellular processes. This Oryza sativa subsp. japonica (Rice) protein is Phospholipase D alpha 1 (PLD1).